Reading from the N-terminus, the 374-residue chain is Transcription factor IIIA (374 aa).

C2H2-type zinc fingers lie at residues 23 to 47 (FHCPYEECGKKYSRPSLLEQHLRTH), 53 to 77 (FVCDYTGCSKAFYRKSHLKIHKRCH), 83 to 107 (FSCHYDGCDAQFYTQQHLERHIEVH), 113 to 138 (YACTWEGCDECFSKHQQLRSHISACH), 144 to 169 (YPCTYQDCELRFATKQKLQNHVNRAH), 204 to 226 (PSCSICGRQFKTAAHLRHHVVLH), and 236 to 261 (YHCPMEGCKKSFTRSSALKKHISVIH). The C2H2-type 8; atypical zinc finger occupies 267-291 (FHCDSCGTKFGYKHMLQRHLERGTC). The C2H2-type 9 zinc finger occupies 349–374 (YSCSFPECNYRFKRLYDMHRHLNSHH).

Its subcellular location is the nucleus. Is required for correct transcription of 5S RNA genes by RNA polymerase III. Also binds the transcribed 5S RNA's. Initiates transcription of the 5S ribosomal RNA gene. This is Transcription factor IIIA (sfc2) from Schizosaccharomyces pombe (strain 972 / ATCC 24843) (Fission yeast).